The chain runs to 604 residues: Glucose-methanol-choline family oxidoreductase mfmG (604 aa).

The signal sequence occupies residues 1 to 24 (MYMLRPSSLLLATGLLNQGSSVLA). A glycan (N-linked (GlcNAc...) asparagine) is linked at Asn32. Residues 44–45 (TA) and 65–66 (EA) each bind FAD. 2 N-linked (GlcNAc...) asparagine glycosylation sites follow: Asn76 and Asn97. Residue 126–129 (NFMA) coordinates FAD. Residues Asn260, Asn265, Asn401, and Asn460 are each glycosylated (N-linked (GlcNAc...) asparagine). His538 acts as the Proton acceptor in catalysis. FAD-binding positions include Ala572 and 584 to 585 (PQ).

Belongs to the GMC oxidoreductase family. As to quaternary structure, homodimer. FAD is required as a cofactor.

Its function is as follows. Oxidoreductase; part of the gene cluster that mediates the biosynthesis of the phthalide-terpenoid hybrid 11'-O-desmethylfendlerol. MfmG seems not to be involved directly in the biosynthesis of 11'-O-desmethylfendlerol and its role has still to be determined. The biosynthesis of 11'-O-desmethylfendlerol begins with the NR-PKS mfmB that forms 3,5-dimethylorsellinic acid (DMOA), which is then transformed into the phthalide 5,7-dihydroxy-4-(hydroxymethyl)-6-methylphthalide by the cytochrome P450 monooxygenase mfmA and the hydrolase mfmC. Subsequently, the methyltransferase mfmE catalyzes 7-O-methylation to yield 5-hydroxy-4-(hydroxymethyl)-7-methoxy-6-methylphthalide, which undergoes C-3 hydroxylation by the cytochrome P450 monooxygenase mfmF. The resultant cyclopolic acid (2,5-dihydroxy-4-(hydroxymethyl)-7-methoxy-6-methylphthalide) is then farnesylated by the DMATS-type prenyltransferase mfmD to afford 5-O-farnesylcyclopolic acid. Finally, the Pyr4-family terpene cyclase mfmH cyclizes the farnesyl moiety of 5-O-farnesylcyclopolic acid into a drimane-like structure, thus completing the biosynthesis of 11'-O-desmethylfendlerol. The sequence is that of Glucose-methanol-choline family oxidoreductase mfmG from Annulohypoxylon moriforme (Filamentous fungus).